A 421-amino-acid chain; its full sequence is NADH-quinone oxidoreductase subunit F 2 (421 aa).

53–62 (GRGGAGFPTG) is an NAD(+) binding site. FMN is bound at residue 165-212 (GAGAYICGEETAMLESLEGKRAQPRLKPPFPAVAGLYASPTVINNVET). The [4Fe-4S] cluster site is built by Cys342, Cys345, Cys348, and Cys388.

This sequence belongs to the complex I 51 kDa subunit family. The cofactor is FMN. Requires [4Fe-4S] cluster as cofactor.

It catalyses the reaction a quinone + NADH + 5 H(+)(in) = a quinol + NAD(+) + 4 H(+)(out). In terms of biological role, NDH-1 shuttles electrons from NADH, via FMN and iron-sulfur (Fe-S) centers, to quinones in the respiratory chain. The immediate electron acceptor for the enzyme in this species is believed to be ubiquinone. Couples the redox reaction to proton translocation (for every two electrons transferred, four hydrogen ions are translocated across the cytoplasmic membrane), and thus conserves the redox energy in a proton gradient. This chain is NADH-quinone oxidoreductase subunit F 2 (nuoF2), found in Rhizobium meliloti (strain 1021) (Ensifer meliloti).